The primary structure comprises 157 residues: Ribosome maturation factor RimP (157 aa).

Belongs to the RimP family.

The protein localises to the cytoplasm. Required for maturation of 30S ribosomal subunits. In Geobacillus sp. (strain WCH70), this protein is Ribosome maturation factor RimP.